A 649-amino-acid chain; its full sequence is Putative cystathionine gamma-synthase YML082W (649 aa).

The interval 242 to 273 (NEANHGEDHDGGISGEVDSQEEPHNGLVSTIP) is disordered. Ser287 carries the phosphoserine modification. Lys451 carries the N6-(pyridoxal phosphate)lysine modification.

Belongs to the trans-sulfuration enzymes family. MET7 subfamily. Pyridoxal 5'-phosphate is required as a cofactor.

It carries out the reaction O-succinyl-L-homoserine + L-cysteine = L,L-cystathionine + succinate + H(+). It participates in amino-acid biosynthesis; L-methionine biosynthesis via de novo pathway; L-cystathionine from O-succinyl-L-homoserine: step 1/1. Its function is as follows. Catalyzes the formation of L-cystathionine from O-succinyl-L-homoserine (OSHS) and L-cysteine, via a gamma-replacement reaction. In the absence of thiol, catalyzes gamma-elimination to form 2-oxobutanoate, succinate and ammonia. In Saccharomyces cerevisiae (strain ATCC 204508 / S288c) (Baker's yeast), this protein is Putative cystathionine gamma-synthase YML082W.